Here is an 878-residue protein sequence, read N- to C-terminus: Probable outer membrane protein PmpI (878 aa).

Residues 1–24 (MRPDHMNFCCLCAAILSSTAVLFG) form the signal peptide. Positions 360–371 (SSKESPLPSSLQ) are enriched in low complexity. The tract at residues 360 to 381 (SSKESPLPSSLQASVTSPTPAT) is disordered. Polar residues predominate over residues 372 to 381 (ASVTSPTPAT). The Autotransporter domain occupies 602–878 (GGAYLFGTWG…SLDLGTTYRF (277 aa)).

It belongs to the PMP outer membrane protein family.

The protein localises to the secreted. It localises to the cell wall. The protein resides in the cell outer membrane. In Chlamydia trachomatis serovar D (strain ATCC VR-885 / DSM 19411 / UW-3/Cx), this protein is Probable outer membrane protein PmpI (pmpI).